The following is a 142-amino-acid chain: Transcriptional regulator MraZ (142 aa).

2 consecutive SpoVT-AbrB domains span residues 5-47 (THTP…PTPE) and 76-119 (AHDE…DRVA).

This sequence belongs to the MraZ family. As to quaternary structure, forms oligomers.

It is found in the cytoplasm. It localises to the nucleoid. This Salinispora tropica (strain ATCC BAA-916 / DSM 44818 / JCM 13857 / NBRC 105044 / CNB-440) protein is Transcriptional regulator MraZ.